A 399-amino-acid chain; its full sequence is Telomeric repeat-binding factor 2-interacting protein 1 (399 aa).

Residues 1-21 form a disordered region; the sequence is MAEAMELGKDPNGPTHSSTLF. At Ala2 the chain carries N-acetylalanine. The BRCT domain occupies 10–101; it reads DPNGPTHSST…EKLELEAYRL (92 aa). Phosphoserine occurs at positions 36 and 43. A Glycyl lysine isopeptide (Lys-Gly) (interchain with G-Cter in SUMO2) cross-link involves residue Lys114. A Myb-like domain is found at 130–190; it reads QSQAGRMVFT…SMKDRYLKRL (61 aa). Residues Ser156 and Ser158 each carry the phosphoserine modification. Lys196 participates in a covalent cross-link: Glycyl lysine isopeptide (Lys-Gly) (interchain with G-Cter in SUMO2). Disordered regions lie at residues 199–245 and 279–309; these read LGEA…KEEI and TMCD…VSAP. A phosphoserine mark is found at Ser205 and Ser208. Residues Lys210, Lys214, and Lys242 each participate in a glycyl lysine isopeptide (Lys-Gly) (interchain with G-Cter in SUMO2) cross-link. The segment covering 281–304 has biased composition (acidic residues); sequence CDDDPCTPEEDSETQPDEEEEEEE. Lys372 participates in a covalent cross-link: Glycyl lysine isopeptide (Lys-Gly) (interchain with G-Cter in SUMO2). The Nuclear localization signal signature appears at 383 to 399; that stretch reads KKFGAQNVARRIEFRKK.

It belongs to the RAP1 family. Associates with the I-kappa-B-kinase (IKK) core complex, composed of CHUK, IKBKB and IKBKG. Homodimer. Component of the shelterin complex (telosome) composed of TERF1, TERF2, TINF2, TERF2IP ACD and POT1. Interacts with TERF2 (but not TERF1) with its C-terminus. Interacts with SLX4/BTBD12. Interacts with TERF2; the interaction is direct.

The protein localises to the nucleus. The protein resides in the cytoplasm. It is found in the chromosome. It localises to the telomere. Its function is as follows. Acts both as a regulator of telomere function and as a transcription regulator. Involved in the regulation of telomere length and protection as a component of the shelterin complex (telosome). In contrast to other components of the shelterin complex, it is dispensible for telomere capping and does not participate in the protection of telomeres against non-homologous end-joining (NHEJ)-mediated repair. Instead, it is required to negatively regulate telomere recombination and is essential for repressing homology-directed repair (HDR), which can affect telomere length. Does not bind DNA directly: recruited to telomeric double-stranded 5'-TTAGGG-3' repeats via its interaction with TERF2. Independently of its function in telomeres, also acts as a transcription regulator: recruited to extratelomeric 5'-TTAGGG-3' sites via its association with TERF2 or other factors, and regulates gene expression. When cytoplasmic, associates with the I-kappa-B-kinase (IKK) complex and acts as a regulator of the NF-kappa-B signaling by promoting IKK-mediated phosphorylation of RELA/p65, leading to activate expression of NF-kappa-B target genes. The sequence is that of Telomeric repeat-binding factor 2-interacting protein 1 (TERF2IP) from Bos taurus (Bovine).